A 138-amino-acid polypeptide reads, in one-letter code: MNISDVAKKTGLTSKAIRFYEEKGLVTPPLRSENGYRTYTQKHLNELTLLRQARQVGFNLEECGELVNLFNDPRRHSADVKKRTLEKVAEIERHISELQSMRDQLLAMAESCPGDDSADCPIIDNLSGCCHHKAQKLR.

The region spanning 1 to 69 (MNISDVAKKT…LEECGELVNL (69 aa)) is the HTH merR-type domain. Residues 4–23 (SDVAKKTGLTSKAIRFYEEK) constitute a DNA-binding region (H-T-H motif). Residues Cys-112 and Cys-120 each contribute to the Cu(+) site.

As to quaternary structure, homodimer.

The protein resides in the cytoplasm. Its function is as follows. Regulates the transcription of the copA and cueO genes. It detects cytoplasmic copper stress and activates transcription in response to increasing copper concentrations. The sequence is that of HTH-type transcriptional regulator CueR (cueR) from Salmonella typhi.